Here is a 113-residue protein sequence, read N- to C-terminus: UPF0102 protein Mfla_2283 (113 aa).

It belongs to the UPF0102 family.

This Methylobacillus flagellatus (strain ATCC 51484 / DSM 6875 / VKM B-1610 / KT) protein is UPF0102 protein Mfla_2283.